The primary structure comprises 38 residues: Large ribosomal subunit protein bL36 (38 aa).

It belongs to the bacterial ribosomal protein bL36 family.

In Cellvibrio japonicus (strain Ueda107) (Pseudomonas fluorescens subsp. cellulosa), this protein is Large ribosomal subunit protein bL36.